Here is a 359-residue protein sequence, read N- to C-terminus: Cytohesin-interacting protein (359 aa).

Positions 77 to 166 constitute a PDZ domain; it reads VVTVEKQDNG…LLTIETLNGT (90 aa). A coiled-coil region spans residues 165–188; it reads GTMIHRRAELEAKLQTLKQTLKKK. The tract at residues 166 to 188 is interaction with CYTH1; sequence TMIHRRAELEAKLQTLKQTLKKK.

As to quaternary structure, interacts with CYTH1 and SNX27.

The protein localises to the cytoplasm. It localises to the early endosome. Functionally, by its binding to cytohesin-1 (CYTH1), it modifies activation of ARFs by CYTH1 and its precise function may be to sequester CYTH1 in the cytoplasm. This is Cytohesin-interacting protein (Cytip) from Mus musculus (Mouse).